The primary structure comprises 570 residues: La-related protein 7 (570 aa).

Residue Met-1 is modified to N-acetylmethionine. Over residues 1 to 16 (METENQKTMEESTKRK) the composition is skewed to basic and acidic residues. 2 disordered regions span residues 1–24 (METENQKTMEESTKRKEEKKKRSR) and 180–364 (LNNP…ERHK). An HTH La-type RNA-binding domain is found at 22–116 (RSRVKQVLAD…KPLGERPKDE (95 aa)). Positions 119-197 (RTVYVELLPK…PRKPGIFPKT (79 aa)) constitute an RRM domain. The span at 213–222 (KKKKKKKGRI) shows a compositional bias: basic residues. Lys-231 is covalently cross-linked (Glycyl lysine isopeptide (Lys-Gly) (interchain with G-Cter in SUMO2)). At Thr-251 the chain carries Phosphothreonine. 2 positions are modified to phosphoserine: Ser-253 and Ser-256. Thr-260 is subject to Phosphothreonine. A compositionally biased stretch (basic and acidic residues) spans 286–295 (RAGKRERCSA). Phosphoserine occurs at positions 294 and 334. Position 335 is a phosphothreonine (Thr-335). Residues 340 to 349 (ETDRKGDSLS) are compositionally biased toward basic and acidic residues. Phosphoserine is present on Ser-347. The span at 350 to 363 (KVKRKHKKKHKERH) shows a compositional bias: basic residues. Lys-406 participates in a covalent cross-link: Glycyl lysine isopeptide (Lys-Gly) (interchain with G-Cter in SUMO2). The 114-residue stretch at 438 to 551 (QFVTGVIVKI…TEKLITKAEK (114 aa)) folds into the xRRM domain.

The protein belongs to the LARP7 family. As to quaternary structure, core component of the 7SK RNP complex, at least composed of 7SK RNA, LARP7, MEPCE, HEXIM1 (or HEXIM2) and P-TEFb (composed of CDK9 and CCNT1/cyclin-T1). Interacts with METTL16. Interacts with RBM7; upon genotoxic stress this interaction is enhanced, triggering the release of inactive P-TEFb complex from the core, yielding to P-TEFb complex activation. Associates with box C/D small nucleolar ribonucleoprotein (snoRNP) complexes.

It localises to the nucleus. Its subcellular location is the nucleoplasm. RNA-binding protein that specifically binds distinct small nuclear RNA (snRNAs) and regulates their processing and function. Specifically binds the 7SK snRNA (7SK RNA) and acts as a core component of the 7SK ribonucleoprotein (RNP) complex, thereby acting as a negative regulator of transcription elongation by RNA polymerase II. The 7SK RNP complex sequesters the positive transcription elongation factor b (P-TEFb) in a large inactive 7SK RNP complex preventing RNA polymerase II phosphorylation and subsequent transcriptional elongation. The 7SK RNP complex also promotes snRNA gene transcription by RNA polymerase II via interaction with the little elongation complex (LEC). LARP7 specifically binds to the highly conserved 3'-terminal U-rich stretch of 7SK RNA; on stimulation, remains associated with 7SK RNA, whereas P-TEFb is released from the complex. LARP7 also acts as a regulator of mRNA splicing fidelity by promoting U6 snRNA processing. Specifically binds U6 snRNAs and associates with a subset of box C/D RNP complexes: promotes U6 snRNA 2'-O-methylation by facilitating U6 snRNA loading into box C/D RNP complexes. U6 snRNA 2'-O-methylation is required for mRNA splicing fidelity. Binds U6 snRNAs with a 5'-CAGGG-3' sequence motif. U6 snRNA processing is required for spermatogenesis. The sequence is that of La-related protein 7 from Mus musculus (Mouse).